Reading from the N-terminus, the 189-residue chain is MILDYNKLKQETKAIVVDIIERSALKKGQIFVLGLSSSEVSGGLIGKNSSSEIGEIIVEVILKELHSRGIYLAVQGCEHVNRALVVEAELAERQQLEVVNVVPNLHAGGSGQVAAFKLMTSPVEVEEIVAHAGIDIGDTSIGMHIKRVQVPLIPISRELGGAHVTALASRPKLIGGARAGYTSDPIRKF.

This sequence belongs to the UPF0340 family.

This chain is UPF0340 protein SAG0103, found in Streptococcus agalactiae serotype V (strain ATCC BAA-611 / 2603 V/R).